A 608-amino-acid polypeptide reads, in one-letter code: Glutamyl-tRNA(Gln) amidotransferase subunit E (608 aa).

A disordered region spans residues 402–422 (EETRGANPDGTTRFLRPRPGA).

It belongs to the GatB/GatE family. GatE subfamily. In terms of assembly, heterodimer of GatD and GatE.

The enzyme catalyses L-glutamyl-tRNA(Gln) + L-glutamine + ATP + H2O = L-glutaminyl-tRNA(Gln) + L-glutamate + ADP + phosphate + H(+). Its function is as follows. Allows the formation of correctly charged Gln-tRNA(Gln) through the transamidation of misacylated Glu-tRNA(Gln) in organisms which lack glutaminyl-tRNA synthetase. The reaction takes place in the presence of glutamine and ATP through an activated gamma-phospho-Glu-tRNA(Gln). The GatDE system is specific for glutamate and does not act on aspartate. The sequence is that of Glutamyl-tRNA(Gln) amidotransferase subunit E from Pyrobaculum calidifontis (strain DSM 21063 / JCM 11548 / VA1).